The sequence spans 511 residues: Ribose import ATP-binding protein RbsA (511 aa).

ABC transporter domains lie at 9–245 and 261–506; these read FEAK…VGRD and LRAE…LPRR. Position 41 to 48 (41 to 48) interacts with ATP; that stretch reads GENGAGKS.

Belongs to the ABC transporter superfamily. Ribose importer (TC 3.A.1.2.1) family. As to quaternary structure, the complex is composed of an ATP-binding protein (RbsA), two transmembrane proteins (RbsC) and a solute-binding protein (RbsB).

The protein resides in the cell inner membrane. The catalysed reaction is D-ribose(out) + ATP + H2O = D-ribose(in) + ADP + phosphate + H(+). Functionally, part of the ABC transporter complex RbsABC involved in ribose import. Responsible for energy coupling to the transport system. This chain is Ribose import ATP-binding protein RbsA, found in Rhodopirellula baltica (strain DSM 10527 / NCIMB 13988 / SH1).